We begin with the raw amino-acid sequence, 123 residues long: Gamma-synuclein (123 aa).

Repeat copies occupy residues 20 to 30 (EKTKQGVTEAA) and 31 to 41 (EKTKEGVMYVG). A 4 X 11 AA tandem repeats of [EGSA]-K-T-K-[EQ]-[GQ]-V-X(4) region spans residues 20–67 (EKTKQGVTEAAEKTKEGVMYVGTKTKGERGTSVTSVAEKTKEQANAVS). A 3; approximate repeat occupies 42–56 (TKTKGERGTSVTSVA). Repeat 4 spans residues 57–67 (EKTKEQANAVS). S67 and S72 each carry phosphoserine. Positions 93–123 (GVVRKEDLEPPAQDQEAKEQEEGEEAKSGGD) are disordered. Basic and acidic residues predominate over residues 107-123 (QEAKEQEEGEEAKSGGD). S120 carries the phosphoserine; by BARK1, CaMK2 and CK2 modification.

This sequence belongs to the synuclein family. As to quaternary structure, may be a centrosome-associated protein. Interacts with MYOC; affects its secretion and its aggregation. Post-translationally, phosphorylated. Phosphorylation by GRK5 appears to occur on residues distinct from the residue phosphorylated by other kinases. In terms of tissue distribution, specifically expressed in the peripheral nervous system. High expression in motoneurons of the brainstem. Also found in neurons of many other brain regions including the cerebellar cortex, thalamus, hypothalamus and CA1, CA2, CA3 and CA4 regions of the hippocampus.

The protein localises to the cytoplasm. It is found in the perinuclear region. Its subcellular location is the cytoskeleton. It localises to the microtubule organizing center. The protein resides in the centrosome. The protein localises to the spindle. In terms of biological role, plays a role in neurofilament network integrity. May be involved in modulating axonal architecture during development and in the adult. In vitro, increases the susceptibility of neurofilament-H to calcium-dependent proteases. May also function in modulating the keratin network in skin. Activates the MAPK and Elk-1 signal transduction pathway. This Rattus norvegicus (Rat) protein is Gamma-synuclein (Sncg).